The primary structure comprises 996 residues: Cilia- and flagella-associated protein 251 (996 aa).

WD repeat units lie at residues 73–114 (GHCN…PKKT), 118–164 (PHPN…EPCL), 168–211 (EFDR…KGFN), 219–258 (PSLK…EKVD), 282–319 (KGSN…IAWF), 399–438 (SIVS…SVLS), 445–485 (TDKE…WQNS), 494–533 (QGKP…FDVN), 547–593 (IHHS…YSKQ), 615–658 (EQET…FKFC), and 719–759 (AHPD…LEQI). Residues 971–996 (DLEGEERDDNIEDQYEDEENEEYDQD) are disordered.

It is found in the cell projection. The protein localises to the cilium. As component of a spoke-associated complex, regulates ciliary mobility by mediating a stable and functional assembly of the radial spoke 3 (RS3). The sequence is that of Cilia- and flagella-associated protein 251 from Tetrahymena thermophila (strain SB210).